The following is a 310-amino-acid chain: Adenylyl-sulfate kinase 4, chloroplastic (310 aa).

A chloroplast-targeting transit peptide spans 1–75; sequence MDVAAMARCV…MAKDESISSR (75 aa). 116 to 124 provides a ligand contact to ATP; the sequence is GLSGSGKSS. Residues Asp-146, Arg-149, Arg-163, Asn-166, 189–190, and Gly-239 contribute to the substrate site; that span reads IS. The active-site Phosphoserine intermediate is the Ser-190.

Belongs to the APS kinase family. Homodimer; disulfide-linked. As to expression, expressed in root vasculature, root tips, leaf epidermal and guard cells, pollen grains and radicle of immature seeds.

Its subcellular location is the plastid. The protein localises to the chloroplast. It catalyses the reaction adenosine 5'-phosphosulfate + ATP = 3'-phosphoadenylyl sulfate + ADP + H(+). It participates in sulfur metabolism; hydrogen sulfide biosynthesis; sulfite from sulfate: step 2/3. In terms of biological role, catalyzes the phosphorylation of adenosine 5'-phosphosulfate to 3'-phosphoadenylyl sulfate, which is the activated sulfate form for sulfation reactions. Essential for plant reproduction and viability. The chain is Adenylyl-sulfate kinase 4, chloroplastic (APK4) from Arabidopsis thaliana (Mouse-ear cress).